A 259-amino-acid chain; its full sequence is Methyltransferase sdnD (259 aa).

Belongs to the FkbM methyltransferase family.

The protein operates within antibiotic biosynthesis. Functionally, methyltransferase; part of the gene cluster that mediates the biosynthesis of sordarin and hypoxysordarin, glycoside antibiotics with a unique tetracyclic diterpene aglycone structure. First, the geranylgeranyl diphosphate synthase sdnC constructs GGDP from farnesyl diphosphate and isopentenyl diphosphate. The diterpene cyclase sdnA then catalyzes the cyclization of GGDP to afford cycloaraneosene. Cycloaraneosene is then hydroxylated four times by the putative cytochrome P450 monooxygenases sdnB, sdnE, sdnF and sdnH to give a hydroxylated cycloaraneosene derivative such as cycloaraneosene-8,9,13,19-tetraol. Although the order of the hydroxylations is unclear, at least C8, C9 and C13 of the cycloaraneosene skeleton are hydroxylated before the sordaricin formation. Dehydration of the 13-hydroxy group of the hydroxylated cycloaraneosene derivative might be catalyzed by an unassigned hypothetical protein such as sdnG and sdnP to construct the cyclopentadiene moiety. The FAD-dependent oxidoreductase sdnN is proposed to catalyze the oxidation at C9 of the hydroxylated cycloaraneosene derivative and also catalyze the Baeyer-Villiger oxidation to give the lactone intermediate. The presumed lactone intermediate would be hydrolyzed to give an acrolein moiety and a carboxylate moiety. Then, [4+2]cycloaddition would occur between the acrolein moiety and the cyclopentadiene moiety to give sordaricin. SdnN might also be involved in the [4+2]cycloaddition after the hypothesized oxidation to accommodate the oxidized product and prompt the [4+2]cycloaddition. GDP-6-deoxy-D-altrose may be biosynthesized from GDP-D-mannose by the putative GDP-mannose-4,6-dehydratase sdnI and the short-chain dehydrogenase sdnK. The glycosyltransferase sdnJ catalyzes the attachment of 6-deoxy-D-altrose onto the 19-hydroxy group of sordaricin to give 4'-O-demethylsordarin. The methyltransferase sdnD would complete the biosynthesis of sordarin. Sordarin can be further modified into hypoxysordarin. The unique acyl chain at the 3'-hydroxy group of hypoxysordarin would be constructed by an iterative type I PKS sdnO and the trans-acting polyketide methyltransferase sdnL. SdnL would be responsible for the introduction of an alpha-methyl group of the polyketide chain. Alternatively, the beta-lactamase-like protein sdnR might be responsible for the cleavage and transfer of the polyketide chain from the PKS sdnO to sordarin. Two putative cytochrome P450 monooxygenases, sdnQ and sdnT, might catalyze the epoxidations of the polyketide chain to complete the biosynthesis of hypoxysordarin. Transcriptional regulators sdnM and sdnS are presumably encoded for the transcriptional regulation of the expression of the sdn gene cluster. This is Methyltransferase sdnD from Sordaria araneosa (Pleurage araneosa).